Here is a 92-residue protein sequence, read N- to C-terminus: Small ribosomal subunit protein uS19 (92 aa).

Belongs to the universal ribosomal protein uS19 family.

Protein S19 forms a complex with S13 that binds strongly to the 16S ribosomal RNA. The chain is Small ribosomal subunit protein uS19 from Azorhizobium caulinodans (strain ATCC 43989 / DSM 5975 / JCM 20966 / LMG 6465 / NBRC 14845 / NCIMB 13405 / ORS 571).